A 327-amino-acid polypeptide reads, in one-letter code: Lipoyl synthase (327 aa).

Residues cysteine 74, cysteine 79, cysteine 85, cysteine 100, cysteine 104, cysteine 107, and serine 314 each contribute to the [4Fe-4S] cluster site. The region spanning phenylalanine 86–lysine 303 is the Radical SAM core domain.

Belongs to the radical SAM superfamily. Lipoyl synthase family. [4Fe-4S] cluster is required as a cofactor.

It is found in the cytoplasm. It carries out the reaction [[Fe-S] cluster scaffold protein carrying a second [4Fe-4S](2+) cluster] + N(6)-octanoyl-L-lysyl-[protein] + 2 oxidized [2Fe-2S]-[ferredoxin] + 2 S-adenosyl-L-methionine + 4 H(+) = [[Fe-S] cluster scaffold protein] + N(6)-[(R)-dihydrolipoyl]-L-lysyl-[protein] + 4 Fe(3+) + 2 hydrogen sulfide + 2 5'-deoxyadenosine + 2 L-methionine + 2 reduced [2Fe-2S]-[ferredoxin]. It functions in the pathway protein modification; protein lipoylation via endogenous pathway; protein N(6)-(lipoyl)lysine from octanoyl-[acyl-carrier-protein]: step 2/2. Catalyzes the radical-mediated insertion of two sulfur atoms into the C-6 and C-8 positions of the octanoyl moiety bound to the lipoyl domains of lipoate-dependent enzymes, thereby converting the octanoylated domains into lipoylated derivatives. The protein is Lipoyl synthase of Pseudomonas aeruginosa (strain LESB58).